Consider the following 154-residue polypeptide: 3-hydroxyacyl-[acyl-carrier-protein] dehydratase FabZ (154 aa).

His-54 is a catalytic residue.

This sequence belongs to the thioester dehydratase family. FabZ subfamily.

It is found in the cytoplasm. The enzyme catalyses a (3R)-hydroxyacyl-[ACP] = a (2E)-enoyl-[ACP] + H2O. Involved in unsaturated fatty acids biosynthesis. Catalyzes the dehydration of short chain beta-hydroxyacyl-ACPs and long chain saturated and unsaturated beta-hydroxyacyl-ACPs. The chain is 3-hydroxyacyl-[acyl-carrier-protein] dehydratase FabZ from Shewanella putrefaciens (strain CN-32 / ATCC BAA-453).